The following is a 458-amino-acid chain: Light-independent protochlorophyllide reductase subunit N (458 aa).

[4Fe-4S] cluster contacts are provided by Cys-22, Cys-47, and Cys-107.

This sequence belongs to the BchN/ChlN family. In terms of assembly, protochlorophyllide reductase is composed of three subunits; ChlL, ChlN and ChlB. Forms a heterotetramer of two ChlB and two ChlN subunits. The cofactor is [4Fe-4S] cluster.

The protein localises to the plastid. Its subcellular location is the chloroplast. The enzyme catalyses chlorophyllide a + oxidized 2[4Fe-4S]-[ferredoxin] + 2 ADP + 2 phosphate = protochlorophyllide a + reduced 2[4Fe-4S]-[ferredoxin] + 2 ATP + 2 H2O. It participates in porphyrin-containing compound metabolism; chlorophyll biosynthesis (light-independent). In terms of biological role, component of the dark-operative protochlorophyllide reductase (DPOR) that uses Mg-ATP and reduced ferredoxin to reduce ring D of protochlorophyllide (Pchlide) to form chlorophyllide a (Chlide). This reaction is light-independent. The NB-protein (ChlN-ChlB) is the catalytic component of the complex. This Chaetosphaeridium globosum (Charophycean green alga) protein is Light-independent protochlorophyllide reductase subunit N.